The chain runs to 380 residues: Alkaline protease (380 aa).

The N-terminal stretch at 1 to 27 (MKKPLGKIVASTALLISVAFSSSIASA) is a signal peptide. The propeptide occupies 28 to 111 (AEEAKEKYLI…IEEDAEVTTM (84 aa)). An Inhibitor I9 domain is found at 34-111 (KYLIGFNEQE…IEEDAEVTTM (78 aa)). Ca(2+) is bound at residue Gln113. Residues 116 to 379 (PWGISRVQAP…SGLVNAEAAT (264 aa)) form the Peptidase S8 domain. Catalysis depends on Asp143, which acts as the Charge relay system. Asp151 contributes to the Ca(2+) binding site. His173 acts as the Charge relay system in catalysis. Ca(2+) contacts are provided by Leu184, Asn186, Ile188, Val190, Ala274, Tyr276, and Ala279. Residue Ser326 is the Charge relay system of the active site.

Belongs to the peptidase S8 family. Ca(2+) is required as a cofactor.

The protein resides in the secreted. The sequence is that of Alkaline protease from Shouchella clausii (Alkalihalobacillus clausii).